The chain runs to 261 residues: Cytochrome c oxidase subunit 3 (261 aa).

The Mitochondrial matrix segment spans residues 1–15 (MAHQAHAYHMVDPSP). Residues 16-34 (WPLTGAVAALLLTSGLAIW) traverse the membrane as a helical segment. The Mitochondrial intermembrane portion of the chain corresponds to 35-40 (FPFNSL). The helical transmembrane segment at 41-66 (ILLTLGLVLLLLTMYQWWRDIVREGT) threads the bilayer. At 67 to 72 (FQGHHT) the chain is on the mitochondrial matrix side. The chain crosses the membrane as a helical span at residues 73–105 (PPVQKGLRYGMILFITSEVFFFLGFFWAFYHSS). The Mitochondrial intermembrane segment spans residues 106–128 (LAPTPELGGCWPPTGIVPLNPFE). The chain crosses the membrane as a helical span at residues 129–152 (VPLLNTAVLLASGVTVTWAHHSIM). At 153–155 (EGE) the chain is on the mitochondrial matrix side. A helical membrane pass occupies residues 156 to 183 (RKQAIHSLTLTILLGFYFTFLQAMEYYE). At 184 to 190 (APFTIAD) the chain is on the mitochondrial intermembrane side. Residues 191-223 (GVYGSTFFVATGFHGLHVIIGSTFLAICLLRQI) form a helical membrane-spanning segment. Topologically, residues 224–232 (RYHFTSEHH) are mitochondrial matrix. The helical transmembrane segment at 233–256 (FGFEAAAWYWHFVDVVWLFLYISI) threads the bilayer. The Mitochondrial intermembrane segment spans residues 257-261 (YWWGS).

This sequence belongs to the cytochrome c oxidase subunit 3 family. As to quaternary structure, component of the cytochrome c oxidase (complex IV, CIV), a multisubunit enzyme composed of 14 subunits. The complex is composed of a catalytic core of 3 subunits MT-CO1, MT-CO2 and MT-CO3, encoded in the mitochondrial DNA, and 11 supernumerary subunits COX4I, COX5A, COX5B, COX6A, COX6B, COX6C, COX7A, COX7B, COX7C, COX8 and NDUFA4, which are encoded in the nuclear genome. The complex exists as a monomer or a dimer and forms supercomplexes (SCs) in the inner mitochondrial membrane with NADH-ubiquinone oxidoreductase (complex I, CI) and ubiquinol-cytochrome c oxidoreductase (cytochrome b-c1 complex, complex III, CIII), resulting in different assemblies (supercomplex SCI(1)III(2)IV(1) and megacomplex MCI(2)III(2)IV(2)).

It is found in the mitochondrion inner membrane. The enzyme catalyses 4 Fe(II)-[cytochrome c] + O2 + 8 H(+)(in) = 4 Fe(III)-[cytochrome c] + 2 H2O + 4 H(+)(out). Component of the cytochrome c oxidase, the last enzyme in the mitochondrial electron transport chain which drives oxidative phosphorylation. The respiratory chain contains 3 multisubunit complexes succinate dehydrogenase (complex II, CII), ubiquinol-cytochrome c oxidoreductase (cytochrome b-c1 complex, complex III, CIII) and cytochrome c oxidase (complex IV, CIV), that cooperate to transfer electrons derived from NADH and succinate to molecular oxygen, creating an electrochemical gradient over the inner membrane that drives transmembrane transport and the ATP synthase. Cytochrome c oxidase is the component of the respiratory chain that catalyzes the reduction of oxygen to water. Electrons originating from reduced cytochrome c in the intermembrane space (IMS) are transferred via the dinuclear copper A center (CU(A)) of subunit 2 and heme A of subunit 1 to the active site in subunit 1, a binuclear center (BNC) formed by heme A3 and copper B (CU(B)). The BNC reduces molecular oxygen to 2 water molecules using 4 electrons from cytochrome c in the IMS and 4 protons from the mitochondrial matrix. The protein is Cytochrome c oxidase subunit 3 (mt-co3) of Tetraodon nigroviridis (Spotted green pufferfish).